A 351-amino-acid chain; its full sequence is sn-1 oleoyl-lipid 12-desaturase (351 aa).

The next 2 helical transmembrane spans lie at 46–66 and 68–88; these read WASV…IIYL and WYCL…AFVV. The short motif at 90 to 94 is the Histidine box-1 element; it reads HDCGH. A helical membrane pass occupies residues 102-122; the sequence is WVNDLVGHIAFAPLIYPFHSW. Positions 126–130 match the Histidine box-2 motif; sequence HDHHH. The next 2 membrane-spanning stretches (helical) occupy residues 199–219 and 222–242; these read IAVV…TTGV and FVKF…TFTI. A Histidine box-3 motif is present at residues 290–294; that stretch reads HHLSV.

This sequence belongs to the fatty acid desaturase type 2 family. The cofactor is Fe(2+).

It is found in the membrane. The enzyme catalyses a 1-[(9Z)-octadecenoyl]-2-acyl-glycerolipid + 2 reduced [2Fe-2S]-[ferredoxin] + O2 + 2 H(+) = a 1-[(9Z,12Z)-octadecdienoyl]-2-acyl-glycerolipid + 2 oxidized [2Fe-2S]-[ferredoxin] + 2 H2O. The protein operates within lipid metabolism; polyunsaturated fatty acid biosynthesis. Its function is as follows. Desaturase involved in fatty acid biosynthesis. Introduces a double bond at carbon 12 of oleoyl groups (18:1) attached to the sn-1 position of the glycerol moiety of membrane glycerolipids. This enzyme is involved in chilling tolerance because the phase transition temperature of lipids of cellular membranes depends on the degree of unsaturation of fatty acids of the membrane lipids. The polypeptide is sn-1 oleoyl-lipid 12-desaturase (Synechocystis sp. (strain ATCC 27184 / PCC 6803 / Kazusa)).